The primary structure comprises 778 residues: LPS-assembly protein LptD (778 aa).

Positions 1-23 are cleaved as a signal peptide; sequence MKTRYSVLSVAMTAAFYTQYAQA.

Belongs to the LptD family. In terms of assembly, component of the lipopolysaccharide transport and assembly complex. Interacts with LptE and LptA.

It is found in the cell outer membrane. In terms of biological role, together with LptE, is involved in the assembly of lipopolysaccharide (LPS) at the surface of the outer membrane. This chain is LPS-assembly protein LptD, found in Actinobacillus pleuropneumoniae serotype 5b (strain L20).